The chain runs to 629 residues: 1-deoxy-D-xylulose-5-phosphate synthase (629 aa).

Thiamine diphosphate contacts are provided by residues histidine 72 and 113–115; that span reads GHA. Residue aspartate 144 coordinates Mg(2+). Thiamine diphosphate contacts are provided by residues 145–146, asparagine 174, tyrosine 287, and glutamate 370; that span reads GA. Asparagine 174 is a Mg(2+) binding site.

It belongs to the transketolase family. DXPS subfamily. As to quaternary structure, homodimer. Mg(2+) is required as a cofactor. It depends on thiamine diphosphate as a cofactor.

It carries out the reaction D-glyceraldehyde 3-phosphate + pyruvate + H(+) = 1-deoxy-D-xylulose 5-phosphate + CO2. It participates in metabolic intermediate biosynthesis; 1-deoxy-D-xylulose 5-phosphate biosynthesis; 1-deoxy-D-xylulose 5-phosphate from D-glyceraldehyde 3-phosphate and pyruvate: step 1/1. Its function is as follows. Catalyzes the acyloin condensation reaction between C atoms 2 and 3 of pyruvate and glyceraldehyde 3-phosphate to yield 1-deoxy-D-xylulose-5-phosphate (DXP). The polypeptide is 1-deoxy-D-xylulose-5-phosphate synthase (Prochlorococcus marinus (strain MIT 9312)).